A 466-amino-acid polypeptide reads, in one-letter code: Magnetosome-associated protein MamJ (466 aa).

Disordered stretches follow at residues 1–23 (MAKNRRDRGTDLPGDGDQKISTG) and 60–80 (ANQGGLVETAQPPSAPIRSQD). Residues 1–24 (MAKNRRDRGTDLPGDGDQKISTGP) form a not required to restore magnetic response to deletion mutant region. Positions 25-80 (EIVSVTVHPSPNLAAAAKPVQGDIWASLLESSPWSANQGGLVETAQPPSAPIRSQD) are required to restore magnetic response to deletion mutant. Tandem repeat unit repeat units follow at residues 81–168 (PVPV…VEPE) and 169–256 (PAPV…VEPE). Not required to restore magnetic response to deletion mutant regions lie at residues 81–256 (PVPV…VEPE), 136–334 (ETDA…SQAE), 333–374 (AESV…AVEA), and 432–466 (VGSNVVAGTRRLAQTIEVSCGSCSSPKCDAEDKNK). 3 Glu-Pro-rich motif repeats span residues 145–164 (IEPEPALVEPVIEIEAEAAE), 233–252 (IEPEPALVEPVIEIEAEAAE), and 253–272 (VEPEPAPVEPVIEIEAEAAE). Required to restore magnetic response to deletion mutant regions lie at residues 375 to 432 (TRQP…GRLV) and 426 to 466 (VKGG…DKNK).

The protein belongs to the magnetosome MamJ protein family. As to quaternary structure, forms homooligomers. Interacts with MamK. Identified by N-terminal sequencing of a protein that is about 96 kDa in size. The protein runs anomalously on protein gels.

It localises to the magnetosome. Required for assembly of magnetosome chains. Regulates the dynamic behavior of MamK filaments. May connect magnetosomes to MamK filaments. Moves from the cell poles towards midcell; movement does not depend on the treadmilling ability of MamK, suggesting MamJ associates and disassociates continuously from the MamK filament. The chain is Magnetosome-associated protein MamJ from Magnetospirillum gryphiswaldense (strain DSM 6361 / JCM 21280 / NBRC 15271 / MSR-1).